Reading from the N-terminus, the 460-residue chain is Cysteine--tRNA ligase (460 aa).

C28 is a binding site for Zn(2+). Positions 30-40 (VTIYDLCHIGH) match the 'HIGH' region motif. Zn(2+)-binding residues include C209, H234, and E238. The 'KMSKS' region signature appears at 266-270 (KMSKS). Residue K269 participates in ATP binding.

It belongs to the class-I aminoacyl-tRNA synthetase family. Monomer. Zn(2+) serves as cofactor.

It localises to the cytoplasm. The catalysed reaction is tRNA(Cys) + L-cysteine + ATP = L-cysteinyl-tRNA(Cys) + AMP + diphosphate. This chain is Cysteine--tRNA ligase, found in Vibrio parahaemolyticus serotype O3:K6 (strain RIMD 2210633).